Consider the following 359-residue polypeptide: Proton-coupled zinc antiporter SLC30A2 (359 aa).

At 1–56 (MASRSFFGALWKSEASRIPPVNLPSVELAVQSNHYCHAQKDSGSHPNSEKQRARRK) the chain is on the cytoplasmic side. The Mitochondrial localization signal signature appears at 34-37 (HYCH). Residue Cys-36 coordinates Zn(2+). Residues 57–77 (LYVASAICLVFMIGEIIGGYL) form a helical membrane-spanning segment. Topologically, residues 78–86 (AQSLAIMTD) are lumenal. Residues 87–107 (AAHLLTDFASMLISLFSLWVS) traverse the membrane as a helical segment. His-89 and Asp-93 together coordinate Zn(2+). The Cytoplasmic segment spans residues 108-123 (SRPATKTMNFGWQRAE). The chain crosses the membrane as a helical span at residues 124-144 (ILGALLSVLSIWVVTGVLVYL). Over 145–159 (AVQRLISGDYEIKGD) the chain is Lumenal. The chain crosses the membrane as a helical span at residues 160–180 (TMLITSGCAVAVNIIMGLALH). At 181-207 (QSGHGHSHGHSHEDSSQQQQNPSVRAA) the chain is on the cytoplasmic side. Residues 208-228 (FIHVVGDLLQSVGVLVAAYII) traverse the membrane as a helical segment. Zn(2+) contacts are provided by His-210 and Asp-214. Residues 229-236 (YFKPEYKY) lie on the Lumenal side of the membrane. A helical transmembrane segment spans residues 237-257 (VDPICTFLFSILVLGTTLTIL). Residues 258-291 (RDVILVLMEGTPKGVDFTTVKNLLLSVDGVEALH) are Cytoplasmic-facing. The short motif at 281 to 282 (LL) is the Lysosomal targeting motif element. Ser-283 is modified (phosphoserine). Zn(2+)-binding residues include His-291, His-308, and Glu-342. Residues 292–312 (SLHIWALTVAQPVLSVHIAIA) form a helical membrane-spanning segment. Over 313-359 (QNVDAQAVLKVARDRLQGKFNFHTMTIQIESYSEDMKSCQECQGPSE) the chain is Lumenal.

This sequence belongs to the cation diffusion facilitator (CDF) transporter (TC 2.A.4) family. SLC30A subfamily. Homodimer. Interacts (via lysosomal targeting motif) with AP3D1; in AP-3-mediated transport to lysosomes. Interacts with TMEM163. In terms of processing, phosphorylated at Ser-283. Phosphorylation at Ser-283 prevents localization to lysosomes. Dephosphorylation of Ser-283 which triggers localization to lysosomes, accumulation of zinc into lysosomes and lysosomal-mediated cell death is induced by TNF-alpha. Detected in intestine, kidney, seminal vesicles and testis.

It is found in the cytoplasmic vesicle. The protein resides in the secretory vesicle membrane. Its subcellular location is the zymogen granule membrane. It localises to the endosome membrane. The protein localises to the lysosome membrane. It is found in the mitochondrion inner membrane. It carries out the reaction Zn(2+)(in) + 2 H(+)(out) = Zn(2+)(out) + 2 H(+)(in). Functionally, electroneutral proton-coupled antiporter concentrating zinc ions into a variety of intracellular organelles including endosomes, zymogen granules and mitochondria. Thereby, plays a crucial role in cellular zinc homeostasis to confer upon cells protection against its potential cytotoxicity. Regulates the zinc concentration of milk, through the transport of zinc ions into secretory vesicles of mammary cells. By concentrating zinc ions into lysosomes participates to lysosomal-mediated cell death during early mammary gland involution. The sequence is that of Proton-coupled zinc antiporter SLC30A2 from Rattus norvegicus (Rat).